Consider the following 89-residue polypeptide: Small ribosomal subunit protein uS15 (89 aa).

Belongs to the universal ribosomal protein uS15 family. Part of the 30S ribosomal subunit. Forms a bridge to the 50S subunit in the 70S ribosome, contacting the 23S rRNA.

One of the primary rRNA binding proteins, it binds directly to 16S rRNA where it helps nucleate assembly of the platform of the 30S subunit by binding and bridging several RNA helices of the 16S rRNA. Functionally, forms an intersubunit bridge (bridge B4) with the 23S rRNA of the 50S subunit in the ribosome. The polypeptide is Small ribosomal subunit protein uS15 (Thermus thermophilus (strain ATCC BAA-163 / DSM 7039 / HB27)).